We begin with the raw amino-acid sequence, 143 residues long: 3-hydroxyacyl-[acyl-carrier-protein] dehydratase FabZ (143 aa).

His49 is a catalytic residue.

Belongs to the thioester dehydratase family. FabZ subfamily.

It is found in the cytoplasm. It catalyses the reaction a (3R)-hydroxyacyl-[ACP] = a (2E)-enoyl-[ACP] + H2O. Involved in unsaturated fatty acids biosynthesis. Catalyzes the dehydration of short chain beta-hydroxyacyl-ACPs and long chain saturated and unsaturated beta-hydroxyacyl-ACPs. The polypeptide is 3-hydroxyacyl-[acyl-carrier-protein] dehydratase FabZ (Wolbachia pipientis wMel).